Reading from the N-terminus, the 158-residue chain is Large ribosomal subunit protein uL22 (158 aa).

The protein belongs to the universal ribosomal protein uL22 family. As to quaternary structure, part of the 50S ribosomal subunit.

Its function is as follows. This protein binds specifically to 23S rRNA. It makes multiple contacts with different domains of the 23S rRNA in the assembled 50S subunit and ribosome. Functionally, the globular domain of the protein is located near the polypeptide exit tunnel on the outside of the subunit, while an extended beta-hairpin is found that lines the wall of the exit tunnel in the center of the 70S ribosome. This chain is Large ribosomal subunit protein uL22, found in Haloquadratum walsbyi (strain DSM 16790 / HBSQ001).